The following is a 248-amino-acid chain: Trypsin I-P1 (248 aa).

The signal sequence occupies residues 1–15; it reads MKFLVLVAFVGVTVA. Positions 16-25 are cleaved as a propeptide — activation peptide; sequence FPISDEDDDK. Residues 26-246 form the Peptidase S1 domain; the sequence is IVGGYSCARS…YVSWIKTTMS (221 aa). Disulfide bonds link C32–C162, C50–C66, C134–C235, C141–C208, C173–C187, and C198–C222. H65 serves as the catalytic Charge relay system. Residues E77, N79, and E87 each coordinate Ca(2+). Residue D109 is the Charge relay system of the active site. The active-site Charge relay system is the S202.

Belongs to the peptidase S1 family. Ca(2+) is required as a cofactor. High levels are seen in the pancreas while lower levels are found in the liver, spleen and thymus.

It localises to the secreted. The protein resides in the extracellular space. It carries out the reaction Preferential cleavage: Arg-|-Xaa, Lys-|-Xaa.. This is Trypsin I-P1 from Gallus gallus (Chicken).